The primary structure comprises 689 residues: Glycine--tRNA ligase beta subunit (689 aa).

It belongs to the class-II aminoacyl-tRNA synthetase family. Tetramer of two alpha and two beta subunits.

It is found in the cytoplasm. The catalysed reaction is tRNA(Gly) + glycine + ATP = glycyl-tRNA(Gly) + AMP + diphosphate. This is Glycine--tRNA ligase beta subunit from Salmonella paratyphi C (strain RKS4594).